Consider the following 857-residue polypeptide: Leucine--tRNA ligase (857 aa).

Residues 42-52 carry the 'HIGH' region motif; the sequence is PYPSGNLHMGH. The 'KMSKS' region signature appears at 615 to 619; it reads KMSKS. An ATP-binding site is contributed by K618.

This sequence belongs to the class-I aminoacyl-tRNA synthetase family.

The protein localises to the cytoplasm. It carries out the reaction tRNA(Leu) + L-leucine + ATP = L-leucyl-tRNA(Leu) + AMP + diphosphate. This Thermosynechococcus vestitus (strain NIES-2133 / IAM M-273 / BP-1) protein is Leucine--tRNA ligase.